The following is a 578-amino-acid chain: Leucine-rich repeat-containing protein 15 (578 aa).

An N-terminal signal peptide occupies residues 1–21 (MPLKHYLLLLVGCQAWALGLA). Residues 22 to 53 (YYGCPSECTCSRASQVECTGARIVAMPTPLPW) enclose the LRRNT domain. Topologically, residues 22–535 (YYGCPSECTC…TWGMTEAQSG (514 aa)) are extracellular. LRR repeat units follow at residues 54-75 (NAMSLQVVNTHITELPENLFLN), 78-99 (ALIALKMEKNELSTIMPGAFRN), 102-123 (SLRYLSLANNKLRMLPIRVFQD), 126-147 (NLESLLLSNNQLVQIQPAQFSQ), 150-171 (NLRELQLHGNNLESIPEEAFDH), 174-195 (GLTKLNLGRNSFTHLSPRLFQH), 198-219 (NLQVLRLHENRLSDIPMGTFDA), 222-243 (NLQELALQENQIGTLSPGLFHN), 246-267 (NLQRLYLSNNHISQLPPGIFMQ), 270-291 (QLNKLTLFGNSLRELSPGVFGP), 294-315 (NLRELWLYNNHITSLADNTFSH), 318-339 (QLQVLILSHNQLTYISPGAFNG), 342-363 (NLRELSLHTNALQDLDSNVFRS), 366-387 (NLQNISLQSNRLRQLPGSIFAN), and 390-411 (GLTTIQLQNNNLENLPLGIFDH). The N-linked (GlcNAc...) asparagine glycan is linked to Asn75. An N-linked (GlcNAc...) asparagine glycan is attached at Asn369. The region spanning 423 to 473 (NPWRCDSDILPLHNWLLLNRARLGTDTLPVCSSPANVRGQSLVIININFPG) is the LRRCT domain. The interval 476–500 (VQGPETPEVPSYPDTPSYPDTTSVS) is disordered. Residues 536–556 (LAIAAIVIGIIALACSLAACI) traverse the membrane as a helical segment. Residues 557–578 (CCCCCKKRSQAVLMQMKAPNEC) are Cytoplasmic-facing.

Its subcellular location is the cell membrane. In Rattus norvegicus (Rat), this protein is Leucine-rich repeat-containing protein 15 (Lrrc15).